We begin with the raw amino-acid sequence, 208 residues long: Small ribosomal subunit protein uS9c (208 aa).

The N-terminal 51 residues, 1 to 51, are a transit peptide targeting the chloroplast; sequence MAVSISSLTSSFASLSFTSNLTPKPQTLPMARTKPFSLSNPAVVKPLVITA. Thr52 carries the post-translational modification N-acetylthreonine. The segment at 185–208 is disordered; it reads DSRIVERKKPGLKKARKAPQFSKR. The span at 194-208 shows a compositional bias: basic residues; sequence PGLKKARKAPQFSKR.

In terms of assembly, component of the chloroplast small ribosomal subunit (SSU). Mature 70S chloroplast ribosomes of higher plants consist of a small (30S) and a large (50S) subunit. The 30S small subunit contains 1 molecule of ribosomal RNA (16S rRNA) and 24 different proteins. The 50S large subunit contains 3 rRNA molecules (23S, 5S and 4.5S rRNA) and 33 different proteins. uS9c binds directly to 16S ribosomal RNA. uS9c interacts with translation factor pY (PSRP1).

It localises to the plastid. It is found in the chloroplast. Functionally, component of the chloroplast ribosome (chloro-ribosome), a dedicated translation machinery responsible for the synthesis of chloroplast genome-encoded proteins, including proteins of the transcription and translation machinery and components of the photosynthetic apparatus. The polypeptide is Small ribosomal subunit protein uS9c (PRPS9) (Spinacia oleracea (Spinach)).